Consider the following 171-residue polypeptide: Putative antiporter subunit mnhG2 (171 aa).

The next 3 membrane-spanning stretches (helical) occupy residues 11 to 31 (IAALLIFLGSIIAVISAIGIV), 51 to 71 (VLLTLVGVLIYFTNEQSFFSV), and 72 to 92 (RLLLSIVFINLTSPVGMHLVA). Over residues 144–156 (DVQKQRQKEKQQE) the composition is skewed to basic and acidic residues. Residues 144 to 171 (DVQKQRQKEKQQEENIESLSEARRETKD) form a disordered region.

The protein belongs to the CPA3 antiporters (TC 2.A.63) subunit G family. May form a heterooligomeric complex that consists of seven subunits: mnhA2, mnhB2, mnhC2, mnhD2, mnhE2, mnhF2 and mnhG2.

The protein localises to the cell membrane. The chain is Putative antiporter subunit mnhG2 (mnhG2) from Staphylococcus haemolyticus (strain JCSC1435).